The sequence spans 239 residues: Uridylate kinase (239 aa).

10–13 (KLSG) serves as a coordination point for ATP. G52 is a UMP binding site. Positions 53 and 57 each coordinate ATP. Residues D72 and 133–140 (TGNPFFTT) each bind UMP. T160, Y166, and D169 together coordinate ATP.

The protein belongs to the UMP kinase family. As to quaternary structure, homohexamer.

It is found in the cytoplasm. The catalysed reaction is UMP + ATP = UDP + ADP. It functions in the pathway pyrimidine metabolism; CTP biosynthesis via de novo pathway; UDP from UMP (UMPK route): step 1/1. Its activity is regulated as follows. Inhibited by UTP. In terms of biological role, catalyzes the reversible phosphorylation of UMP to UDP. The polypeptide is Uridylate kinase (Porphyromonas gingivalis (strain ATCC BAA-308 / W83)).